Consider the following 705-residue polypeptide: Elongation factor G (705 aa).

Residues 8–294 (ELCRNFGIMA…SVIDYLPSPL (287 aa)) form the tr-type G domain. GTP contacts are provided by residues 17–24 (AHIDAGKT), 92–96 (DTPGH), and 146–149 (NKMD).

This sequence belongs to the TRAFAC class translation factor GTPase superfamily. Classic translation factor GTPase family. EF-G/EF-2 subfamily.

Its subcellular location is the cytoplasm. Functionally, catalyzes the GTP-dependent ribosomal translocation step during translation elongation. During this step, the ribosome changes from the pre-translocational (PRE) to the post-translocational (POST) state as the newly formed A-site-bound peptidyl-tRNA and P-site-bound deacylated tRNA move to the P and E sites, respectively. Catalyzes the coordinated movement of the two tRNA molecules, the mRNA and conformational changes in the ribosome. The polypeptide is Elongation factor G (Cereibacter sphaeroides (strain ATCC 17023 / DSM 158 / JCM 6121 / CCUG 31486 / LMG 2827 / NBRC 12203 / NCIMB 8253 / ATH 2.4.1.) (Rhodobacter sphaeroides)).